Here is a 71-residue protein sequence, read N- to C-terminus: Large ribosomal subunit protein bL31 (71 aa).

Residues Cys-16, Cys-18, Cys-37, and Cys-40 each coordinate Zn(2+).

It belongs to the bacterial ribosomal protein bL31 family. Type A subfamily. As to quaternary structure, part of the 50S ribosomal subunit. Zn(2+) serves as cofactor.

Its function is as follows. Binds the 23S rRNA. The polypeptide is Large ribosomal subunit protein bL31 (Pseudoalteromonas atlantica (strain T6c / ATCC BAA-1087)).